A 72-amino-acid polypeptide reads, in one-letter code: Translation initiation factor IF-1 (72 aa).

In terms of domain architecture, S1-like spans 1–72 (MAKEDMIEVE…TRGRITYRFK (72 aa)).

It belongs to the IF-1 family. In terms of assembly, component of the 30S ribosomal translation pre-initiation complex which assembles on the 30S ribosome in the order IF-2 and IF-3, IF-1 and N-formylmethionyl-tRNA(fMet); mRNA recruitment can occur at any time during PIC assembly.

The protein localises to the cytoplasm. One of the essential components for the initiation of protein synthesis. Stabilizes the binding of IF-2 and IF-3 on the 30S subunit to which N-formylmethionyl-tRNA(fMet) subsequently binds. Helps modulate mRNA selection, yielding the 30S pre-initiation complex (PIC). Upon addition of the 50S ribosomal subunit IF-1, IF-2 and IF-3 are released leaving the mature 70S translation initiation complex. The protein is Translation initiation factor IF-1 of Enterococcus faecalis (strain ATCC 700802 / V583).